The primary structure comprises 440 residues: Adenylyltransferase and sulfurtransferase UBA4 (440 aa).

An N-acetylmethionine modification is found at Met-1. ATP contacts are provided by residues Gly-77, Asp-98, 105-109, Lys-122, and 166-167; these read SNLHR and DS. Zn(2+) is bound by residues Cys-208 and Cys-211. The active-site Glycyl thioester intermediate; for adenylyltransferase activity is the Cys-225. Zn(2+) is bound by residues Cys-286 and Cys-289. Phosphoserine is present on Ser-326. One can recognise a Rhodanese domain in the interval 339–438; it reads FLAKHIFLDV…YIDDIDQTIP (100 aa). Cys-397 acts as the Cysteine persulfide intermediate; for sulfurtransferase activity in catalysis.

This sequence in the N-terminal section; belongs to the HesA/MoeB/ThiF family. UBA4 subfamily. Requires Zn(2+) as cofactor.

The protein localises to the cytoplasm. Its subcellular location is the cytosol. It functions in the pathway tRNA modification; 5-methoxycarbonylmethyl-2-thiouridine-tRNA biosynthesis. Its function is as follows. Plays a central role in 2-thiolation of mcm(5)S(2)U at tRNA wobble positions of cytosolic tRNA(Lys), tRNA(Glu) and tRNA(Gln). Acts by mediating the C-terminal thiocarboxylation of sulfur carrier URM1. Its N-terminus first activates URM1 as acyl-adenylate (-COAMP), then the persulfide sulfur on the catalytic cysteine is transferred to URM1 to form thiocarboxylation (-COSH) of its C-terminus. The reaction probably involves hydrogen sulfide that is generated from the persulfide intermediate and that acts as a nucleophile towards URM1. Subsequently, a transient disulfide bond is formed. Does not use thiosulfate as sulfur donor; NFS1 probably acting as a sulfur donor for thiocarboxylation reactions. Prior mcm(5) tRNA modification by the elongator complex is required for 2-thiolation. May also be involved in protein urmylation. The sequence is that of Adenylyltransferase and sulfurtransferase UBA4 from Saccharomyces cerevisiae (strain YJM789) (Baker's yeast).